The sequence spans 428 residues: 3-phosphoshikimate 1-carboxyvinyltransferase (428 aa).

3-phosphoshikimate is bound by residues lysine 22, serine 23, and arginine 27. Lysine 22 provides a ligand contact to phosphoenolpyruvate. Residues glycine 94 and arginine 122 each contribute to the phosphoenolpyruvate site. 3-phosphoshikimate-binding residues include serine 169, serine 170, glutamine 171, serine 197, aspartate 315, and lysine 342. Position 171 (glutamine 171) interacts with phosphoenolpyruvate. Aspartate 315 functions as the Proton acceptor in the catalytic mechanism. The phosphoenolpyruvate site is built by arginine 346, arginine 389, and lysine 414.

This sequence belongs to the EPSP synthase family. In terms of assembly, monomer.

The protein localises to the cytoplasm. It carries out the reaction 3-phosphoshikimate + phosphoenolpyruvate = 5-O-(1-carboxyvinyl)-3-phosphoshikimate + phosphate. It participates in metabolic intermediate biosynthesis; chorismate biosynthesis; chorismate from D-erythrose 4-phosphate and phosphoenolpyruvate: step 6/7. Catalyzes the transfer of the enolpyruvyl moiety of phosphoenolpyruvate (PEP) to the 5-hydroxyl of shikimate-3-phosphate (S3P) to produce enolpyruvyl shikimate-3-phosphate and inorganic phosphate. In Cellvibrio japonicus (strain Ueda107) (Pseudomonas fluorescens subsp. cellulosa), this protein is 3-phosphoshikimate 1-carboxyvinyltransferase.